Reading from the N-terminus, the 863-residue chain is MWGSYTKVSLIESQEPIALSRPVVPPKPNTSALRRVLRRARDGFALNIDEAVVAMTARGEDLADLCASAARVRDVGLETAGRRGADGRLPITYSRKVFIPVTHLCRDSCHYCTFVTAPDMLRTQGAGMYLEPNEILNLARRGSELGCKEALFTLGDRPEDRWAQARDWLAERGYDSTLSYLRAMAIRVLEETGLLPHLNPGVMSWSELSRLKPVAPSMGMMLETTSRRLFETKGLAHYGSLDKDPTVRLRVLTDAGRLSIPFTTGLLVGIGETLAERADTLHEIRKSNKEFGHVQEVIVQNFRAKEHTAMAAVPDARIEDYLATVAVARLVLGPAMRIQAPPNLVSREECLALVTAGVDDWGGVSPLTPDHVNPERPWPALHELAAVTAEAGYTLVQRLTAQPKYVQAGAAWIDPRVRGHVVALADPVTGLARDVNPVGMPWQEPDDVESAGRMDINTAIDTEGRNTEARSDLDSAFGDWESIRAHVHELADCAPERIDTDVLAALRSAERDPAGCTDDEYLALATADGPALEAVTALADSLRRDVVGDDVTFVVNRNINFTNICYTGCRFCAFAQRKGDTDAYSLSREEVAERAWEAHVQGATEVCMQGGIDPELPVTGYVDLVRAVKTRVPSMHVHAFSPMEIANGVAKSGFSIREWLISLREAGLDTIPGTAAEILDDEVRWVLTKGKLPTSMWIEIVTTAHEVGLRSSSTMMYGHVDGPRHWVAHLQVLRDIQDRTGGFTEFVPLPFVHQNSPLYLAGAARPGPTHRDNRAVHALARIMLHGRISHIQTSWVKLGVERTQAMLNGGANDLGGTLMEETISRMAGSEYGSAKTVAELIAIAEGIGRTARQRTTTYALRGA.

Radical SAM core domains lie at 91-343 (ITYS…APPN) and 551-792 (VTFV…SHIQ). The tract at residues 92–424 (TYSRKVFIPV…PRVRGHVVAL (333 aa)) is cofG-like. [4Fe-4S] cluster contacts are provided by cysteine 105, cysteine 109, cysteine 112, cysteine 565, cysteine 569, and cysteine 572. Residues 528–861 (DGPALEAVTA…RQRTTTYALR (334 aa)) are cofH-like.

This sequence in the N-terminal section; belongs to the radical SAM superfamily. CofG family. The protein in the C-terminal section; belongs to the radical SAM superfamily. CofH family. [4Fe-4S] cluster serves as cofactor.

It catalyses the reaction 5-amino-6-(D-ribitylamino)uracil + L-tyrosine + S-adenosyl-L-methionine = 5-amino-5-(4-hydroxybenzyl)-6-(D-ribitylimino)-5,6-dihydrouracil + 2-iminoacetate + 5'-deoxyadenosine + L-methionine + H(+). The catalysed reaction is 5-amino-5-(4-hydroxybenzyl)-6-(D-ribitylimino)-5,6-dihydrouracil + S-adenosyl-L-methionine = 7,8-didemethyl-8-hydroxy-5-deazariboflavin + 5'-deoxyadenosine + L-methionine + NH4(+) + H(+). It participates in cofactor biosynthesis; coenzyme F0 biosynthesis. Its function is as follows. Catalyzes the radical-mediated synthesis of 7,8-didemethyl-8-hydroxy-5-deazariboflavin (FO) from 5-amino-6-(D-ribitylamino)uracil and L-tyrosine. The protein is FO synthase (fbiC) of Mycobacterium leprae (strain TN).